A 3421-amino-acid chain; its full sequence is Hemocyanin 2 (3421 aa).

A signal peptide spans 1 to 19; that stretch reads MWTILALLTATLLFEGAFS. The tract at residues 20-442 is functional unit a (wall); that stretch reads VDTVVRKNVD…KPPVPVAQAN (423 aa). Position 62 (His-62) interacts with Cu cation. A disulfide bridge connects residues Cys-68 and Cys-78. A cross-link (2'-(S-cysteinyl)-histidine (Cys-His)) is located at residues 79 to 81; that stretch reads CLH. Cu cation is bound by residues His-81, His-90, His-200, His-204, and His-231. Disulfide bonds link Cys-190/Cys-257 and Cys-344/Cys-356. Residue Asn-408 is glycosylated (N-linked (GlcNAc...) asparagine). A functional unit b (wall) region spans residues 443-853; that stretch reads LAVRKNINDL…RADAKDFGHS (411 aa). His-483 provides a ligand contact to Cu cation. Cysteines 489 and 500 form a disulfide. Positions 501 to 503 form a cross-link, 2'-(S-cysteinyl)-histidine (Cys-His); it reads CVH. Cu cation contacts are provided by His-503, His-512, His-622, His-626, His-653, and His-894. Cys-612 and Cys-678 are joined by a disulfide. A WD 1 repeat occupies 632–673; it reads SEKYSMSSLHYTAFDPIFYLHHSNVDRLWAIWQALQIRRGKS. The segment at 854–1275 is functional unit c (wall); it reads RKIRKAVDSL…DEYREAVTSA (422 aa). Cys-900 and Cys-911 are joined by a disulfide. The segment at residues 912–914 is a cross-link (2'-(S-cysteinyl)-histidine (Cys-His)); it reads CVH. Cu cation-binding residues include His-914, His-923, His-1033, His-1037, and His-1063. Cystine bridges form between Cys-1023–Cys-1090 and Cys-1180–Cys-1187. A WD 2 repeat occupies 1043–1084; sequence NEPYSMSSLRYTTYDPIFFLHRSNTDRLWAIWQALQKYRGKP. Residue Asn-1183 is glycosylated (N-linked (GlcNAc...) asparagine). The interval 1276 to 1685 is functional unit d (wall); the sequence is SHIRKNIRDL…NIYYDGLSQH (410 aa). His-1313 contributes to the Cu cation binding site. Cys-1319 and Cys-1328 form a disulfide bridge. Positions 1329-1331 form a cross-link, 2'-(S-cysteinyl)-histidine (Cys-His); that stretch reads CVH. Residues His-1331 and His-1340 each contribute to the Cu cation site. A WD 3 repeat occupies 1387–1425; that stretch reads QTFDPNPFFRGHIAFENAVTSRDPQPELWDNKDFYENVM. Cystine bridges form between Cys-1434/Cys-1501 and Cys-1590/Cys-1599. 3 residues coordinate Cu cation: His-1444, His-1448, and His-1475. One copy of the WD 4 repeat lies at 1454 to 1495; the sequence is RAKYSLSSLDYTAFDPVFFLHHANVDRIWAIWQDLQRYRKKP. Asn-1653 carries N-linked (GlcNAc...) asparagine glycosylation. Residues 1686–2102 form a functional unit e (wall) region; sequence NLVRKEVSSL…HGINVRHVGR (417 aa). His-1726 is a binding site for Cu cation. Cys-1732 and Cys-1743 are disulfide-bonded. Positions 1744-1746 form a cross-link, 2'-(S-cysteinyl)-histidine (Cys-His); the sequence is CLH. 5 residues coordinate Cu cation: His-1746, His-1755, His-1868, His-1872, and His-1899. Disulfide bonds link Cys-1858-Cys-1925 and Cys-2014-Cys-2020. The stretch at 1878 to 1919 is one WD 5 repeat; that stretch reads SKTHSIGHLHYASYDPLFYIHHSQTDRIWAIWQALQEHRGLS. A functional unit f (wall) region spans residues 2103–2522; the sequence is NRIRMELSEL…DDHGSDHIAG (420 aa). Position 2143 (His-2143) interacts with Cu cation. Cys-2149 and Cys-2159 are joined by a disulfide. Residues 2160 to 2162 constitute a cross-link (2'-(S-cysteinyl)-histidine (Cys-His)); that stretch reads CIH. Residues His-2162, His-2171, His-2281, His-2285, and His-2312 each coordinate Cu cation. The stretch at 2168-2204 is one WD 6 repeat; it reads PHWHRLYTLQMDMALLSHGSAVAIPYWDWTKPISKLP. 2 disulfide bridges follow: Cys-2271–Cys-2338 and Cys-2425–Cys-2431. The interval 2523 to 2929 is functional unit g (internal arc); the sequence is SGVRKDVTSL…SGHDHSERHD (407 aa). His-2563 contributes to the Cu cation binding site. A disulfide bridge links Cys-2569 with Cys-2579. Residues 2580–2582 constitute a cross-link (2'-(S-cysteinyl)-histidine (Cys-His)); the sequence is CTH. 5 residues coordinate Cu cation: His-2582, His-2591, His-2691, His-2695, and His-2722. 2 cysteine pairs are disulfide-bonded: Cys-2681/Cys-2748 and Cys-2835/Cys-2841. The WD 7 repeat unit spans residues 2700–2742; that stretch reads GHTPYGMSSLEYTAYDPLFYLHHSNTDRIWAIWQALQKYRGFQ. The tract at residues 2898–2927 is disordered; it reads PSDRIKSPTIEHHGGDHHGGDTSGHDHSER. The interval 2930–3421 is functional unit h (internal slab); the sequence is GFFRKEVGSL…VRIHIHIEDE (492 aa). A Cu cation-binding site is contributed by His-2970. A disulfide bridge links Cys-2976 with Cys-2986. Residues 2987-2989 constitute a cross-link (2'-(S-cysteinyl)-histidine (Cys-His)); that stretch reads CVH. Cu cation-binding residues include His-2989, His-2998, His-3099, His-3103, and His-3130. 2 disulfides stabilise this stretch: Cys-3089/Cys-3156 and Cys-3374/Cys-3407. The stretch at 3109 to 3150 is one WD 8 repeat; sequence TETYSMSSLAFSAYDPVFMILHSGLDRLWIIWQELQKLRKKP.

Belongs to the tyrosinase family. Hemocyanin subfamily. In terms of assembly, homo-didecamer and homo-multidecamer. In terms of processing, probably N-glycosylated. Asn-2489 is buried deeply in the protein which make it inaccessible for sugar attachment. As to expression, hemolymph.

Its subcellular location is the secreted. The protein resides in the extracellular space. Its function is as follows. Hemocyanins are copper-containing oxygen carriers occurring freely dissolved in the hemolymph of many mollusks and arthropods. This is Hemocyanin 2 from Megathura crenulata (Giant keyhole limpet).